The sequence spans 583 residues: Ribonuclease ZC3H12A (583 aa).

The span at 1–11 (MSLWELEDRRS) shows a compositional bias: basic and acidic residues. Disordered regions lie at residues 1–29 (MSLW…EATT) and 73–119 (GSAA…GSDL). Residues 15–29 (TPRPAQEPTAEEATT) are compositionally biased toward low complexity. The tract at residues 26–71 (EATTAELQMKVDFFRKLGYSSAEIHSVLQKLGIQADTNTVLGELVK) is ubiquitin association domain. Residues 65 to 134 (VLGELVKHGS…DGSNVAMSHG (70 aa)) form a necessary for interaction with TANK region. Basic and acidic residues predominate over residues 73–82 (GSAAERERQA). At Ser83 the chain carries Phosphoserine. The segment at 96 to 281 (GGGTPKAPTV…LDNFLRKKPL (186 aa)) is RNase. An RNase NYN domain is found at 119 to 274 (LRPIVIDGSN…LGRHGPSLDN (156 aa)). The RNA binding stretch occupies residues 198-204 (RRVGGKR). Asp210 provides a ligand contact to Mg(2+). Disordered regions lie at residues 262–290 (DDPL…KQPC) and 323–404 (ANAL…PSEW). Residues 284–309 (EHKKQPCPYGRKCTYGIKCRFLHPER) form a C3H1-type zinc finger. The segment at 285-441 (HKKQPCPYGR…SELWGVRGGG (157 aa)) is necessary for interaction with ZC3H12D. Over residues 341–352 (RPSPSSQPGSLP) the composition is skewed to low complexity. Basic and acidic residues predominate over residues 353–364 (TEHEQCSPDRKK). Residues 384–393 (PTGRSLPPSG) show a composition bias toward low complexity. Residues Ser422 and Ser426 each carry the phosphoserine modification. Positions 503-530 (YQLPPPTQRLQEPQAPGPGADRGPWGGA) are disordered.

It belongs to the ZC3H12 family. In terms of assembly, oligomer. Found in a deubiquitination complex with TANK, USP10 and ZC3H12A; this complex inhibits genotoxic stress- or interleukin-1-beta-mediated NF-kappaB activation by promoting IKBKG or TRAF6 deubiquitination. Interacts with IKBKG; this interaction increases in response to DNA damage. Interacts with TANK; this interaction increases in response to DNA damage and serves as a bridge to anchor both TANK and USP10 into a deubiquitinating complex. Interacts with TRAF6; this interaction increases in response to DNA damage and is stimulated by TANK. Interacts with USP10; this interaction increases in response to DNA damage and serves as a bridge to anchor both TANK and USP10 into a deubiquitinating complex. Interacts with ZC3H12D. Interacts with TNRC6A. Interacts with IKBKB/IKKB. Interacts with IKBKB/IKKB. Interacts with BTRC; the interaction occurs when ZC3H12A is phosphorylated in a IKBKB/IKKB-dependent manner. Interacts with IRAK1; this interaction increases the interaction between ZC3H12A and IKBKB/IKKB. Interacts with UPF1; this interaction occurs in a mRNA translationally active- and termination-dependent manner and is essential for ZC3H12A-mediated degradation of target mRNAs. Associates with ribosomes. Interacts with ubiquitin. Requires Mg(2+) as cofactor. Phosphorylated by IRAK1; phosphorylation is necessary for subsequent phosphorylation by the I-kappa-B-kinase (IKK) complex. Phosphorylated by I-kappa-B-kinase (IKK) subunits IKBKB/IKKB and CHUK/IKKA at Ser-422 and Ser-426; these phosphorylations promote ubiquitin proteasome-mediated degradation of ZC3H12A and hence facilitates rapid and robust production of IL-6 mRNA in response to toll-like receptor (TLR) or IL-1 receptor stimuli. In terms of processing, ubiquitinated; ubiquitination is induced in response to interleukin IL1 receptor stimuli in a IKBKB/IKKB and IRAK1-dependent manner, leading to proteasome-mediated degradation. Post-translationally, proteolytically cleaved between Arg-95 and Arg-198 by MALT1 in activated T-cells; cleavage at Arg-95 is critical for promoting ZC3H12A degradation in response to T-cell receptor (TCR) stimulation, and hence is necessary for prolonging the stability of a set of mRNAs controlling T-cell activation and Th17 cell differentiation.

Its subcellular location is the nucleus. It localises to the cytoplasm. The protein localises to the P-body. It is found in the rough endoplasmic reticulum membrane. The protein resides in the cytoplasmic granule. Functionally, endoribonuclease involved in various biological functions such as cellular inflammatory response and immune homeostasis, glial differentiation of neuroprogenitor cells, cell death of cardiomyocytes, adipogenesis and angiogenesis. Functions as an endoribonuclease involved in mRNA decay. Modulates the inflammatory response by promoting the degradation of a set of translationally active cytokine-induced inflammation-related mRNAs, such as IL6 and IL12B, during the early phase of inflammation. Prevents aberrant T-cell-mediated immune reaction by degradation of multiple mRNAs controlling T-cell activation, such as those encoding cytokines (IL6 and IL2), cell surface receptors (ICOS, TNFRSF4 and TNFR2) and transcription factor (REL). Inhibits cooperatively with ZC3H12A the differentiation of helper T cells Th17 in lungs. They repress target mRNA encoding the Th17 cell-promoting factors IL6, ICOS, REL, IRF4, NFKBID and NFKBIZ. The cooperation requires RNA-binding by RC3H1 and the nuclease activity of ZC3H12A. Together with RC3H1, destabilizes TNFRSF4/OX40 mRNA by binding to the conserved stem loop structure in its 3'UTR. Self regulates by destabilizing its own mRNA. Cleaves mRNA harboring a stem-loop (SL), often located in their 3'-UTRs, during the early phase of inflammation in a helicase UPF1-dependent manner. Plays a role in the inhibition of microRNAs (miRNAs) biogenesis. Cleaves the terminal loop of a set of precursor miRNAs (pre-miRNAs) important for the regulation of the inflammatory response leading to their degradation, and thus preventing the biosynthesis of mature miRNAs. Also plays a role in promoting angiogenesis in response to inflammatory cytokines by inhibiting the production of antiangiogenic microRNAs via its anti-dicer RNase activity. Affects the overall ubiquitination of cellular proteins. Positively regulates deubiquitinase activity promoting the cleavage at 'Lys-48'- and 'Lys-63'-linked polyubiquitin chains on TNF receptor-associated factors (TRAFs), preventing JNK and NF-kappa-B signaling pathway activation, and hence negatively regulating macrophage-mediated inflammatory response and immune homeostasis. Also induces deubiquitination of the transcription factor HIF1A, probably leading to its stabilization and nuclear import, thereby positively regulating the expression of proangiogenic HIF1A-targeted genes. Involved in a TANK-dependent negative feedback response to attenuate NF-kappaB activation through the deubiquitination of IKBKG or TRAF6 in response to interleukin-1-beta (IL1B) stimulation or upon DNA damage. Prevents stress granules (SGs) formation and promotes macrophage apoptosis under stress conditions, including arsenite-induced oxidative stress, heat shock, and energy deprivation. Plays a role in the regulation of macrophage polarization; promotes IL4-induced polarization of macrophages M1 into anti-inflammatory M2 state. May also act as a transcription factor that regulates the expression of multiple genes involved in inflammatory response, angiogenesis, adipogenesis and apoptosis. Functions as a positive regulator of glial differentiation of neuroprogenitor cells through an amyloid precursor protein (APP)-dependent signaling pathway. Attenuates septic myocardial contractile dysfunction in response to lipopolysaccharide (LPS) by reducing I-kappa-B-kinase (IKK)-mediated NF-kappa-B activation, and hence myocardial pro-inflammatory cytokine production. In Bos taurus (Bovine), this protein is Ribonuclease ZC3H12A.